Here is a 239-residue protein sequence, read N- to C-terminus: SH3 domain-binding glutamic acid-rich protein (239 aa).

The SH3-binding motif lies at 124 to 130 (NGIPLPP). Residues 159–239 (GLAPPPDSKG…GEEPGEDEDS (81 aa)) form a disordered region. The span at 167–185 (KGSEKAEEGGETEAQKEGS) shows a compositional bias: basic and acidic residues. Over residues 198–239 (NEEEGETATEETEEIAMEGAEGEAEEEEETAEGEEPGEDEDS) the composition is skewed to acidic residues.

This sequence belongs to the SH3BGR family. In terms of tissue distribution, expressed in heart and skeletal muscle.

The sequence is that of SH3 domain-binding glutamic acid-rich protein (SH3BGR) from Homo sapiens (Human).